The primary structure comprises 352 residues: S-adenosylmethionine:tRNA ribosyltransferase-isomerase (352 aa).

Belongs to the QueA family. In terms of assembly, monomer.

It localises to the cytoplasm. The enzyme catalyses 7-aminomethyl-7-carbaguanosine(34) in tRNA + S-adenosyl-L-methionine = epoxyqueuosine(34) in tRNA + adenine + L-methionine + 2 H(+). It participates in tRNA modification; tRNA-queuosine biosynthesis. Its function is as follows. Transfers and isomerizes the ribose moiety from AdoMet to the 7-aminomethyl group of 7-deazaguanine (preQ1-tRNA) to give epoxyqueuosine (oQ-tRNA). This Paraburkholderia phytofirmans (strain DSM 17436 / LMG 22146 / PsJN) (Burkholderia phytofirmans) protein is S-adenosylmethionine:tRNA ribosyltransferase-isomerase.